The following is a 140-amino-acid chain: Large ribosomal subunit protein uL16 (140 aa).

It belongs to the universal ribosomal protein uL16 family. Part of the 50S ribosomal subunit.

In terms of biological role, binds 23S rRNA and is also seen to make contacts with the A and possibly P site tRNAs. This Malacoplasma penetrans (strain HF-2) (Mycoplasma penetrans) protein is Large ribosomal subunit protein uL16.